The primary structure comprises 176 residues: Interleukin-1 receptor antagonist protein (176 aa).

The N-terminal stretch at 1–25 is a signal peptide; that stretch reads METCRCPLSYLISFLLFLSHSETAC. A disulfide bond links cysteine 91 and cysteine 141. A glycan (N-linked (GlcNAc...) asparagine) is linked at asparagine 109.

Belongs to the IL-1 family.

The protein localises to the secreted. In terms of biological role, anti-inflammatory antagonist of interleukin-1 family of proinflammatory cytokines such as interleukin-1beta/IL1B and interleukin-1alpha/IL1A. Protects from immune dysregulation and uncontrolled systemic inflammation triggered by IL1 for a range of innate stimulatory agents such as pathogens. This chain is Interleukin-1 receptor antagonist protein (IL1RN), found in Canis lupus familiaris (Dog).